A 706-amino-acid polypeptide reads, in one-letter code: MMQESATETISNSSMNQNGMSTLSSQLDAGSRDGRSSSDTSSEVSTVELLHLQQQQALQAARQLLLQQQTSGLKSPKNNEKQRPLQVPVSMAMMTPQVITPQQMQQILQQQVLSPQQLQALLQQQQAVMLQQQQLQEFYKKQQEQLHLQLLQQQQQQQQQQQQQQQQQQQQQQQQQQQQQQQQQQQPQPHPGKQAKEQQQLAAQQLVFQQQLLQMQQLQQQQHLLNLQRQGLISIPPSQSALPVQSLPQAGLSPAEIQQLWKEVTGVHSMEDNGIKHGGLDLTTNISSSTTSTTTSKASPPITHHSLLNGQASVLSARRDSSSHEETGASHTLYGHGVCKWPGCENICEDFGQFLKHLNNEHALDDRSTAQCRVQMQVVQQLEIQLSKERERLQAMMTHLHMRPSEPKPSPKPLNLVSTVTMSKNMLETSPQSLPQTPTTPTAPVTPLAQGPSVITPASVPNVGAIRRRHSDKYNIPMSSEIAPNYEFYKNADVRPPFTYATLIRQAIMESSDRQLTLNEIYSWFTRTFAYFRRNAATWKNAVRHNLSLHKCFVRVENVKGAVWTVDEAEYQKRRSQKITASPTLVKNIPTSLGYGAALNASLQAALAESSLPLLSNTGLLNNASTGLLQAVHEDLNGSLDHIDSNGNSSAGCSPQPHIHSIHVKEEPLIADDEDCPMSLVTTANHSPELEEDRELEEEPLSEDLE.

The segment covering 1 to 28 (MMQESATETISNSSMNQNGMSTLSSQLD) has biased composition (polar residues). 2 disordered regions span residues 1 to 45 (MMQE…SEVS) and 275 to 305 (IKHG…ITHH). Low complexity predominate over residues 287–296 (SSSTTSTTTS). The segment at 337 to 362 (GVCKWPGCENICEDFGQFLKHLNNEH) adopts a C2H2-type zinc-finger fold. Residues 379–400 (VQQLEIQLSKERERLQAMMTHL) form a leucine-zipper region. Residues 413-417 (PLNLV) are ctbp1-binding. Positions 495 to 585 (RPPFTYATLI…SQKITASPTL (91 aa)) form a DNA-binding region, fork-head. Residues 672-706 (DDEDCPMSLVTTANHSPELEEDRELEEEPLSEDLE) are disordered. Residues 690–706 (LEEDRELEEEPLSEDLE) are compositionally biased toward acidic residues.

Dimerization is required for DNA-binding. At stage 15, expressed in the anterior/superior eye field and the caudal branchial arch. At later stages, expression persists in the retina and in the caudal branchial arch. Expressed in the pronephros and the tip of the tail. Beginning with stage 35, expression in the brain is localized to distinct subdomains of the anterior prosencephalon, the medial mesencephalon and to lateral domains of the hindbrain.

It is found in the nucleus. Functionally, transcriptional repressor. This is Forkhead box protein P2 from Xenopus laevis (African clawed frog).